The chain runs to 444 residues: Phosphoglucosamine mutase (444 aa).

The active-site Phosphoserine intermediate is the serine 102. The Mg(2+) site is built by serine 102, aspartate 241, aspartate 243, and aspartate 245. Serine 102 is subject to Phosphoserine.

This sequence belongs to the phosphohexose mutase family. Requires Mg(2+) as cofactor. Post-translationally, activated by phosphorylation.

The catalysed reaction is alpha-D-glucosamine 1-phosphate = D-glucosamine 6-phosphate. Catalyzes the conversion of glucosamine-6-phosphate to glucosamine-1-phosphate. The protein is Phosphoglucosamine mutase of Haemophilus ducreyi (strain 35000HP / ATCC 700724).